The primary structure comprises 82 residues: Small ribosomal subunit protein bS16 (82 aa).

The protein belongs to the bacterial ribosomal protein bS16 family.

The polypeptide is Small ribosomal subunit protein bS16 (Shigella boydii serotype 18 (strain CDC 3083-94 / BS512)).